We begin with the raw amino-acid sequence, 449 residues long: Phosphoglucosamine mutase (449 aa).

S101 (phosphoserine intermediate) is an active-site residue. S101, D241, D243, and D245 together coordinate Mg(2+). The residue at position 101 (S101) is a Phosphoserine.

Belongs to the phosphohexose mutase family. Mg(2+) is required as a cofactor. Post-translationally, activated by phosphorylation.

It catalyses the reaction alpha-D-glucosamine 1-phosphate = D-glucosamine 6-phosphate. In terms of biological role, catalyzes the conversion of glucosamine-6-phosphate to glucosamine-1-phosphate. This chain is Phosphoglucosamine mutase, found in Alkaliphilus oremlandii (strain OhILAs) (Clostridium oremlandii (strain OhILAs)).